A 404-amino-acid chain; its full sequence is Cysteine desulfurase IscS (404 aa).

Pyridoxal 5'-phosphate contacts are provided by residues 75 to 76 (AT), N155, Q183, and 203 to 205 (SSH). Position 206 is an N6-(pyridoxal phosphate)lysine (K206). Position 243 (T243) interacts with pyridoxal 5'-phosphate. Catalysis depends on C328, which acts as the Cysteine persulfide intermediate. C328 is a [2Fe-2S] cluster binding site.

It belongs to the class-V pyridoxal-phosphate-dependent aminotransferase family. NifS/IscS subfamily. In terms of assembly, homodimer. Forms a heterotetramer with IscU, interacts with other sulfur acceptors. Pyridoxal 5'-phosphate is required as a cofactor.

The protein resides in the cytoplasm. It carries out the reaction (sulfur carrier)-H + L-cysteine = (sulfur carrier)-SH + L-alanine. It participates in cofactor biosynthesis; iron-sulfur cluster biosynthesis. In terms of biological role, master enzyme that delivers sulfur to a number of partners involved in Fe-S cluster assembly, tRNA modification or cofactor biosynthesis. Catalyzes the removal of elemental sulfur atoms from cysteine to produce alanine. Functions as a sulfur delivery protein for Fe-S cluster synthesis onto IscU, an Fe-S scaffold assembly protein, as well as other S acceptor proteins. In Histophilus somni (strain 129Pt) (Haemophilus somnus), this protein is Cysteine desulfurase IscS.